The sequence spans 729 residues: Fatty acid oxidation complex subunit alpha (729 aa).

Residues 1–189 (MLYKGDTLYL…KIGLVDGVVK (189 aa)) are enoyl-CoA hydratase/isomerase. Asp-296 serves as a coordination point for substrate. The interval 311–729 (ETPKQAAVLG…ARPVGDLKTA (419 aa)) is 3-hydroxyacyl-CoA dehydrogenase. NAD(+) is bound by residues Met-324, Asp-343, 400-402 (VVE), Lys-407, and Ser-429. His-450 acts as the For 3-hydroxyacyl-CoA dehydrogenase activity in catalysis. Asn-453 contacts NAD(+). Substrate contacts are provided by Asn-500 and Tyr-660. Positions 708-729 (RHNEPYYPPVEPARPVGDLKTA) are disordered.

This sequence in the N-terminal section; belongs to the enoyl-CoA hydratase/isomerase family. The protein in the C-terminal section; belongs to the 3-hydroxyacyl-CoA dehydrogenase family. In terms of assembly, heterotetramer of two alpha chains (FadB) and two beta chains (FadA).

The catalysed reaction is a (3S)-3-hydroxyacyl-CoA + NAD(+) = a 3-oxoacyl-CoA + NADH + H(+). It carries out the reaction a (3S)-3-hydroxyacyl-CoA = a (2E)-enoyl-CoA + H2O. The enzyme catalyses a 4-saturated-(3S)-3-hydroxyacyl-CoA = a (3E)-enoyl-CoA + H2O. It catalyses the reaction (3S)-3-hydroxybutanoyl-CoA = (3R)-3-hydroxybutanoyl-CoA. The catalysed reaction is a (3Z)-enoyl-CoA = a 4-saturated (2E)-enoyl-CoA. It carries out the reaction a (3E)-enoyl-CoA = a 4-saturated (2E)-enoyl-CoA. The protein operates within lipid metabolism; fatty acid beta-oxidation. In terms of biological role, involved in the aerobic and anaerobic degradation of long-chain fatty acids via beta-oxidation cycle. Catalyzes the formation of 3-oxoacyl-CoA from enoyl-CoA via L-3-hydroxyacyl-CoA. It can also use D-3-hydroxyacyl-CoA and cis-3-enoyl-CoA as substrate. This Escherichia coli O17:K52:H18 (strain UMN026 / ExPEC) protein is Fatty acid oxidation complex subunit alpha.